The chain runs to 403 residues: MKLASNTPDWVLAALEERRQQDLMRRTITLDSPQIPHTQIHSQDYTAFCSNDYLGLANHPKLIKALNDTAQAYGVGGGSSHLVCGHLAPHQALEEALADWLGYERVMLFSTGYMANLGVISALADKNRPIVQDKLNHASLIDGALLAQAPLRRYLHGDVASAQKLIARSAAGGLLITDGVFSMDGDIAPLTELSQLANQHDWMFMVDDAHGLGCLGENGRGCLALEGLDATSLPILVGTLGKAFGTAGAFVATSNDYADYLTQFARPYVYTTAMSPAIAGATLASLQLIQSAEGQERRDRLARHITYFRQRVQMLPVALMPSNTAIQPIVIGDSKAAIEISEQLKTLGIWCTAIRPPTVPAGSARLRITLSAAHSDEDLVLLCDSLEKVLTAKLLNAKRLNLK.

Arg25 contributes to the substrate binding site. Residue 112–113 coordinates pyridoxal 5'-phosphate; sequence GY. His137 is a substrate binding site. Pyridoxal 5'-phosphate is bound by residues Ser182, His210, and Thr239. At Lys242 the chain carries N6-(pyridoxal phosphate)lysine. Thr358 is a substrate binding site.

It belongs to the class-II pyridoxal-phosphate-dependent aminotransferase family. BioF subfamily. In terms of assembly, homodimer. The cofactor is pyridoxal 5'-phosphate.

The catalysed reaction is 6-carboxyhexanoyl-[ACP] + L-alanine + H(+) = (8S)-8-amino-7-oxononanoate + holo-[ACP] + CO2. The protein operates within cofactor biosynthesis; biotin biosynthesis. Its function is as follows. Catalyzes the decarboxylative condensation of pimeloyl-[acyl-carrier protein] and L-alanine to produce 8-amino-7-oxononanoate (AON), [acyl-carrier protein], and carbon dioxide. The protein is 8-amino-7-oxononanoate synthase of Marinomonas sp. (strain MWYL1).